A 449-amino-acid chain; its full sequence is Histidinol dehydrogenase (449 aa).

NAD(+)-binding residues include Tyr135, Gln199, and Asn229. Substrate-binding residues include Thr252, Gln274, and His277. Zn(2+)-binding residues include Gln274 and His277. Catalysis depends on proton acceptor residues Glu343 and His344. Residues His344, Asp377, Glu431, and His436 each contribute to the substrate site. Zn(2+) is bound at residue Asp377. Residue His436 coordinates Zn(2+).

The protein belongs to the histidinol dehydrogenase family. Zn(2+) serves as cofactor.

The enzyme catalyses L-histidinol + 2 NAD(+) + H2O = L-histidine + 2 NADH + 3 H(+). The protein operates within amino-acid biosynthesis; L-histidine biosynthesis; L-histidine from 5-phospho-alpha-D-ribose 1-diphosphate: step 9/9. Its function is as follows. Catalyzes the sequential NAD-dependent oxidations of L-histidinol to L-histidinaldehyde and then to L-histidine. The polypeptide is Histidinol dehydrogenase (Corynebacterium diphtheriae (strain ATCC 700971 / NCTC 13129 / Biotype gravis)).